The following is a 478-amino-acid chain: Leukotoxin secretion protein D (478 aa).

Residues 1 to 59 (MKIWLSGIYEFFLRYKNTWAEVWKIRKELDHPNRKKDESEFLPAHLDLIETPVSKKPRL) are Cytoplasmic-facing. Residues 60–80 (IAYLIMLFLVVAIVLASVSKV) traverse the membrane as a helical segment. Residues 81–478 (EIVATAPGKL…ESVTESLRER (398 aa)) are Periplasmic-facing.

Belongs to the membrane fusion protein (MFP) (TC 8.A.1) family.

It localises to the cell inner membrane. In terms of biological role, involved in the transport of the Leukotoxin. This is Leukotoxin secretion protein D (lktD) from Mannheimia haemolytica (Pasteurella haemolytica).